Here is a 254-residue protein sequence, read N- to C-terminus: MAYTKIALFAAIAALASAQTQDQINELNVILNDVKSHLQEYISLASDSSSGFSLSSMPAGVLDIGMALASATDDSYTTLYSEVDFAGVSKMLTMVPWYSSRLEPALKSLNGDASSSAAPSSSAAPTSSAAPSSSAAPTSSAASSSSEAKSSSAAPSSSEAKSSSAAPSSSEAKSSSAAPSSSEAKSSSAAPSSTEAKITSAAPSSTGAKTSAISQITDGQIQATKAVSEQTENGAAKAFVGMGAGVVAAAAMLL.

A signal peptide spans 1-18 (MAYTKIALFAAIAALASA). Residues 110-213 (NGDASSSAAP…SSTGAKTSAI (104 aa)) are disordered. The segment covering 113-197 (ASSSAAPSSS…SAAPSSTEAK (85 aa)) has biased composition (low complexity). Tandem repeats lie at residues 114 to 119 (SSSAAP), 120 to 125 (SSSAAP), 126 to 131 (TSSAAP), 132 to 137 (SSSAAP), 138 to 143 (TSSAAS), 144 to 155 (SSSEAKSSSAAP), 156 to 167 (SSSEAKSSSAAP), 168 to 179 (SSSEAKSSSAAP), 180 to 191 (SSSEAKSSSAAP), and 192 to 203 (SSTEAKITSAAP). Residues 114–143 (SSSAAPSSSAAPTSSAAPSSSAAPTSSAAS) are 5 X 6 AA approximate tandem repeats, Ala/Ser-rich. Residues 144-203 (SSSEAKSSSAAPSSSEAKSSSAAPSSSEAKSSSAAPSSSEAKSSSAAPSSTEAKITSAAP) are 5 X 12 AA approximate tandem repeats, Ala/Ser-rich. The segment covering 201–213 (AAPSSTGAKTSAI) has biased composition (polar residues). Residues 210 to 224 (TSAISQITDGQIQAT) form a PIR1/2/3 repeat. Asn233 carries GPI-anchor amidated asparagine lipidation. The propeptide at 234-254 (GAAKAFVGMGAGVVAAAAMLL) is removed in mature form.

It belongs to the SRP1/TIP1 family. In terms of processing, O-glycosylated. Post-translationally, the GPI-anchor is attached to the protein in the endoplasmic reticulum and serves to target the protein to the cell surface. There, the glucosamine-inositol phospholipid moiety is cleaved off and the GPI-modified mannoprotein is covalently attached via its lipidless GPI glycan remnant to the 1,6-beta-glucan of the outer cell wall layer. Covalently linked to beta-1,3-glucan of the inner cell wall layer via an alkali-sensitive ester linkage between the gamma-carboxyl group of glutamic acids, arising from a specific glutamine within the PIR1/2/3 repeat, and hydroxyl groups of glucoses of beta-1,3-glucan chains.

The protein localises to the secreted. Its subcellular location is the cell wall. It is found in the membrane. In terms of biological role, component of the cell wall. Required for anaerobic growth. This Saccharomyces cerevisiae (strain ATCC 204508 / S288c) (Baker's yeast) protein is Cold shock-induced protein TIR1 (TIR1).